The following is a 1953-amino-acid chain: Protein BNI1 (1953 aa).

Disordered regions lie at residues 1–152 (MLKN…ASSL), 230–258 (MRAN…ANSS), 263–282 (KSVL…SNSL), and 287–306 (TLSS…SGSL). Residues 31–40 (ANSNATNSNT) are compositionally biased toward low complexity. Polar residues-rich tracts occupy residues 41–100 (GSPT…SQYM) and 110–143 (VSSQ…RQHT). Residues 174-696 (EMPSDPYEVE…NVSVASTSDE (523 aa)) enclose the GBD/FH3 domain. Positions 232–246 (ANTTSSSTASRTSMA) are enriched in low complexity. Residues 263–278 (KSVLMTSASSPTSTVY) show a composition bias toward polar residues. Ser-311 and Ser-325 each carry phosphoserine. A disordered region spans residues 312–337 (LNNIYRGGAENNTSASTLPGDRTNRP). Coiled-coil stretches lie at residues 712–807 (QTDE…TILN), 864–894 (NKRL…EFEK), and 928–981 (NKLN…YKGF). 3 disordered regions span residues 990–1014 (IMDS…SLDP), 1040–1094 (HEIQ…LDAL), and 1149–1330 (TQKV…MPAS). An FH1 domain is found at 1053–1337 (SSSSSDDESE…PASQIKSAVT (285 aa)). Phosphoserine occurs at positions 1085 and 1170. Residues 1184 to 1211 (DKAEKDMRQHVENGKQGRVVNHEEDKTA) show a composition bias toward basic and acidic residues. A compositionally biased stretch (polar residues) spans 1217-1237 (SKLNNTDGAEDLSTQSSVLSS). The span at 1238–1250 (QPPPPPPPPPPVP) shows a compositional bias: pro residues. Residues 1257 to 1270 (SLEKEKKSEDDTVK) show a composition bias toward basic and acidic residues. The segment covering 1278–1292 (PAPPPPPPPPPPPPM) has biased composition (pro residues). 2 positions are modified to phosphoserine: Ser-1338 and Ser-1344. One can recognise an FH2 domain in the interval 1348–1766 (FEKYPRPHKK…YIKHKKIVEE (419 aa)). Residues 1732–1811 (KFADFINEYK…DKLLEQLKNA (80 aa)) adopt a coiled-coil conformation. The span at 1768 to 1779 (QKRAQEKEKQKE) shows a compositional bias: basic and acidic residues. 3 disordered regions span residues 1768-1797 (QKRA…AEDR), 1809-1844 (KNAG…LLND), and 1872-1899 (PTPL…LEDQ). Residues 1792 to 1826 (DEAEDRRAVMDKLLEQLKNAGPAKSDPSSARKRAL) form the DAD domain. The segment covering 1821–1830 (ARKRALVRKK) has biased composition (basic residues). Residues 1880 to 1896 (VMNTSEDLPSPSKTSAL) are compositionally biased toward polar residues. A Phosphothreonine modification is found at Thr-1918.

Belongs to the formin homology family. BNI1 subfamily. Homodimer, and possibly also homotetramer. Interacts with PFY1 via the FH1 domain and with actin via the FH2 domain.

It localises to the cell membrane. Its subcellular location is the cell projection. The protein localises to the ruffle membrane. The protein resides in the cytoplasm. It is found in the cytoskeleton. Its function is as follows. Required for the assembly of F-actin structures, such as actin cables and stress fibers. Nucleates actin filaments. Binds to the barbed end of the actin filament and acts as a leaky capper, slowing both polymerization and depolymerization. Protects the growing actin fiber from tight capping proteins and so increases the time of elongation and the total amount of F-actin. May organize microtubules by mediating spindle positioning and movement in the budding process. Potential target of the RHO family members. This Saccharomyces cerevisiae (strain ATCC 204508 / S288c) (Baker's yeast) protein is Protein BNI1 (BNI1).